Here is a 282-residue protein sequence, read N- to C-terminus: Putative 1-acyl-sn-glycerol-3-phosphate acyltransferase acl-2 (282 aa).

2 helical membrane-spanning segments follow: residues 4–24 and 32–52; these read FWSIVVFFLLSILFILYNIST and ISFYYFTILLHGMEVCVTMIP. An HXXXXD motif motif is present at residues 98 to 103; sequence HQSSLD. Residues 122–142 traverse the membrane as a helical segment; sequence ILAYVPFFNLGAYFSNTIFID.

It belongs to the 1-acyl-sn-glycerol-3-phosphate acyltransferase family.

Its subcellular location is the membrane. It catalyses the reaction a 1-acyl-sn-glycero-3-phosphate + an acyl-CoA = a 1,2-diacyl-sn-glycero-3-phosphate + CoA. The protein operates within phospholipid metabolism; CDP-diacylglycerol biosynthesis; CDP-diacylglycerol from sn-glycerol 3-phosphate: step 2/3. Functionally, converts lysophosphatidic acid (LPA) into phosphatidic acid by incorporating an acyl moiety at the sn-2 position of the glycerol backbone. This is Putative 1-acyl-sn-glycerol-3-phosphate acyltransferase acl-2 (acl-2) from Caenorhabditis elegans.